The following is a 384-amino-acid chain: Small ribosomal subunit protein mS31 (384 aa).

Residues 1–54 (MLHRIPAFLRPRPFSGLPLSCGNRDVSVAVLPAAQSGAVRTENNIQRHFCTSRS) constitute a mitochondrion transit peptide. The interval 101-136 (TANVKTPKPRGRKPSASLEATVDRLQKAPEDPPKKR) is disordered. Basic and acidic residues predominate over residues 121–136 (TVDRLQKAPEDPPKKR).

Belongs to the mitochondrion-specific ribosomal protein mS31 family. As to quaternary structure, component of the mitochondrial ribosome small subunit (28S) which comprises a 12S rRNA and about 30 distinct proteins.

It localises to the mitochondrion. In Mus musculus (Mouse), this protein is Small ribosomal subunit protein mS31 (Mrps31).